Reading from the N-terminus, the 373-residue chain is Putative glutamate--cysteine ligase 2-2 (373 aa).

It belongs to the glutamate--cysteine ligase type 2 family. YbdK subfamily.

It carries out the reaction L-cysteine + L-glutamate + ATP = gamma-L-glutamyl-L-cysteine + ADP + phosphate + H(+). Functionally, ATP-dependent carboxylate-amine ligase which exhibits weak glutamate--cysteine ligase activity. The chain is Putative glutamate--cysteine ligase 2-2 from Legionella pneumophila (strain Corby).